A 106-amino-acid chain; its full sequence is Urease subunit beta (106 aa).

The protein belongs to the urease beta subunit family. Heterotrimer of UreA (gamma), UreB (beta) and UreC (alpha) subunits. Three heterotrimers associate to form the active enzyme.

Its subcellular location is the cytoplasm. The catalysed reaction is urea + 2 H2O + H(+) = hydrogencarbonate + 2 NH4(+). The protein operates within nitrogen metabolism; urea degradation; CO(2) and NH(3) from urea (urease route): step 1/1. This Prochlorococcus marinus (strain MIT 9312) protein is Urease subunit beta.